The primary structure comprises 785 residues: Endonuclease MutS2 (785 aa).

Residue 335 to 342 coordinates ATP; that stretch reads GPNTGGKT. Positions 710–785 constitute a Smr domain; that stretch reads LDLRGERYEN…GSGVTIVELK (76 aa).

It belongs to the DNA mismatch repair MutS family. MutS2 subfamily. As to quaternary structure, homodimer. Binds to stalled ribosomes, contacting rRNA.

Its function is as follows. Endonuclease that is involved in the suppression of homologous recombination and thus may have a key role in the control of bacterial genetic diversity. In terms of biological role, acts as a ribosome collision sensor, splitting the ribosome into its 2 subunits. Detects stalled/collided 70S ribosomes which it binds and splits by an ATP-hydrolysis driven conformational change. Acts upstream of the ribosome quality control system (RQC), a ribosome-associated complex that mediates the extraction of incompletely synthesized nascent chains from stalled ribosomes and their subsequent degradation. Probably generates substrates for RQC. This chain is Endonuclease MutS2, found in Bacillus velezensis (strain DSM 23117 / BGSC 10A6 / LMG 26770 / FZB42) (Bacillus amyloliquefaciens subsp. plantarum).